A 257-amino-acid polypeptide reads, in one-letter code: uncharacterized protein (257 aa).

6 consecutive transmembrane segments (helical) span residues 23-43 (VLTD…EGLL), 79-99 (FIFI…VLGA), 131-151 (TFGI…AFSV), 158-178 (FAVS…ILMM), 199-219 (AFVL…HYEM), and 221-241 (HSVF…IHYI).

It belongs to the TerC family.

The protein localises to the cell membrane. This is an uncharacterized protein from Bacillus subtilis (strain 168).